The sequence spans 511 residues: ADP,ATP carrier protein 4 (511 aa).

The next 12 helical transmembrane spans lie at 34-54 (VSKF…QNLI), 70-90 (IISF…TAIY), 102-122 (IFYL…YVIF), 157-177 (FSLF…LLFW), 192-212 (FYPL…QFLE), 231-251 (FHTL…IIAI), 296-316 (LIAT…GPWK), 330-350 (AAFI…FVVL), 361-381 (FTAA…FFAV), 390-410 (LIIA…IGAI), 453-473 (LGKS…PSAS), and 476-496 (SIST…LWAT).

The protein belongs to the ADP/ATP translocase tlc family.

The protein resides in the cell membrane. Its function is as follows. Provides the rickettsial cell with host ATP in exchange for rickettsial ADP. This is an obligate exchange system. This energy acquiring activity is an important component of rickettsial parasitism. This is ADP,ATP carrier protein 4 (tlcD) from Rickettsia conorii (strain ATCC VR-613 / Malish 7).